We begin with the raw amino-acid sequence, 494 residues long: MNNLNLIPVIPEIFLAAATCAILLIDLFLSDAKRYLTYVLSLATLVVCAVLSLSDFNAGATSYSFGNMFVSDPMSNLLKFCTYIAVGLTLVYSRQYLEDRQMVNGRLGGEFYILSLFTVLGQMVMMSANNFLIIYLGLEIMSLSLYALVAFRRDNAVAIEAAMKYFVLGALASGFLLYGISMLYGATGSLDLTEVARVIATGAVNKPVLIFGLVFVVAGLAFKLGAVPFHMWVPDVYQGAPTAVTLMLGGAPKLAAFAITIRLLVEALPALAIDWQQMLTILSVLSMAIGNITAIMQTNIKRMLAYSTISQVGFILLGLLSGVVAGADGSTTNGYGAAMFYVITYVLTTLGMFGVIMLLSRAGFEADNIDDFKGLNQRSPWFAFVTLLLMFSLAGVPPVVGFYAKLAVLQAVLSTGQIWLAVVAVLFSLIGAFYYLRVVKVMYFDEPADKAKIVASKDVTVTLSINGAALLALGLVPGPLMTACAAAIIKTLAS.

A run of 14 helical transmembrane segments spans residues 9-29 (VIPE…DLFL), 36-56 (LTYV…LSDF), 73-93 (PMSN…LVYS), 107-127 (LGGE…VMMS), 131-151 (FLII…LVAF), 166-186 (FVLG…LYGA), 209-229 (LIFG…AVPF), 241-261 (PTAV…AITI), 278-298 (MLTI…IMQT), 304-324 (LAYS…SGVV), 339-359 (MFYV…IMLL), 382-402 (FAFV…VVGF), 416-436 (GQIW…FYYL), and 469-489 (ALLA…AAII).

This sequence belongs to the complex I subunit 2 family. NDH-1 is composed of 14 different subunits. Subunits NuoA, H, J, K, L, M, N constitute the membrane sector of the complex.

It is found in the cell inner membrane. The catalysed reaction is a quinone + NADH + 5 H(+)(in) = a quinol + NAD(+) + 4 H(+)(out). Its function is as follows. NDH-1 shuttles electrons from NADH, via FMN and iron-sulfur (Fe-S) centers, to quinones in the respiratory chain. The immediate electron acceptor for the enzyme in this species is believed to be ubiquinone. Couples the redox reaction to proton translocation (for every two electrons transferred, four hydrogen ions are translocated across the cytoplasmic membrane), and thus conserves the redox energy in a proton gradient. The polypeptide is NADH-quinone oxidoreductase subunit N (Herminiimonas arsenicoxydans).